The sequence spans 694 residues: Lamina-associated polypeptide 2, isoform alpha (694 aa).

One can recognise an LEM-like domain in the interval 5-48 (LEDPSVLTKDKLKSELVANNVTLPAGEQRKDVYVQLYLQHLTAR). Disordered regions lie at residues 47–117 (ARNR…ELTN) and 150–209 (REQG…FSEL). The interval 49-108 (NRPPLPAGTNSKGPPDFSSDEEREPTPVLGSGAAAAGRSRAAVGRKATKKTDKPRQEDKD) is linker. Thr57 carries the post-translational modification Phosphothreonine. Phosphoserine occurs at positions 59, 66, and 67. Thr74 carries the phosphothreonine modification. The segment covering 78–93 (GSGAAAAGRSRAAVGR) has biased composition (low complexity). The residue at position 79 (Ser79) is a Phosphoserine. An omega-N-methylarginine mark is found at Arg86 and Arg88. Positions 97–106 (KKTDKPRQED) are enriched in basic and acidic residues. Over residues 107–117 (KDDLDVTELTN) the composition is skewed to acidic residues. The region spanning 109–153 (DLDVTELTNEDLLDQLVKYGVNPGPIVGTTRKLYEKKLLKLREQG) is the LEM domain. Phosphothreonine is present on Thr154. A compositionally biased stretch (polar residues) spans 155–178 (ESRSSTPLPTISSSAENTRQNGSN). Phosphoserine occurs at positions 156 and 159. Phosphothreonine occurs at positions 160 and 164. A phosphoserine mark is found at Ser166 and Ser168. The span at 179–191 (DSDRYSDNEEGKK) shows a compositional bias: basic and acidic residues. Positions 190–196 (KKKEHKK) match the Nuclear localization signal motif. A phosphoserine mark is found at Ser272, Ser312, Ser351, Ser354, Ser370, and Ser424. Positions 338–368 (QPLCPERSHISDQSPLSSKRKALEESESSQL) are disordered. Positions 558 to 657 (TESCNQQLDL…VGRRYLWLKD (100 aa)) form a coiled coil. At Lys656 the chain carries N6-acetyllysine.

Belongs to the LEM family. As to quaternary structure, interacts with LMNA, BANF1 and RB1 and with chromosomes. Associates directly or indirectly with lamins at specific cell-cycle stages. Interacts with CMTM6. In terms of processing, phosphorylated in a mitose-specific manner. Expressed in many tissues. Most abundant in adult thymus and fetal liver.

It is found in the nucleus. The protein resides in the chromosome. In terms of biological role, may be involved in the structural organization of the nucleus and in the post-mitotic nuclear assembly. Plays an important role, together with LMNA, in the nuclear anchorage of RB1. TP and TP5 may play a role in T-cell development and function. TP5 is an immunomodulating pentapeptide. The chain is Lamina-associated polypeptide 2, isoform alpha (TMPO) from Homo sapiens (Human).